We begin with the raw amino-acid sequence, 432 residues long: 3-phosphoshikimate 1-carboxyvinyltransferase (432 aa).

3 residues coordinate 3-phosphoshikimate: K23, S24, and R28. Phosphoenolpyruvate is bound at residue K23. G95 and R123 together coordinate phosphoenolpyruvate. 4 residues coordinate 3-phosphoshikimate: S167, Q169, D317, and K344. Q169 contributes to the phosphoenolpyruvate binding site. Residue D317 is the Proton acceptor of the active site. Positions 348 and 390 each coordinate phosphoenolpyruvate.

It belongs to the EPSP synthase family. As to quaternary structure, monomer.

The protein resides in the cytoplasm. The catalysed reaction is 3-phosphoshikimate + phosphoenolpyruvate = 5-O-(1-carboxyvinyl)-3-phosphoshikimate + phosphate. The protein operates within metabolic intermediate biosynthesis; chorismate biosynthesis; chorismate from D-erythrose 4-phosphate and phosphoenolpyruvate: step 6/7. Functionally, catalyzes the transfer of the enolpyruvyl moiety of phosphoenolpyruvate (PEP) to the 5-hydroxyl of shikimate-3-phosphate (S3P) to produce enolpyruvyl shikimate-3-phosphate and inorganic phosphate. The polypeptide is 3-phosphoshikimate 1-carboxyvinyltransferase (Staphylococcus haemolyticus (strain JCSC1435)).